The primary structure comprises 465 residues: Cysteine--tRNA ligase (465 aa).

A Zn(2+)-binding site is contributed by Cys28. Residues 30 to 40 (PTVYNYIHIGN) carry the 'HIGH' region motif. Residues Cys208, His233, and Glu237 each coordinate Zn(2+). A 'KMSKS' region motif is present at residues 265 to 269 (KMSKS). Lys268 is a binding site for ATP.

It belongs to the class-I aminoacyl-tRNA synthetase family. In terms of assembly, monomer. Zn(2+) is required as a cofactor.

It localises to the cytoplasm. It carries out the reaction tRNA(Cys) + L-cysteine + ATP = L-cysteinyl-tRNA(Cys) + AMP + diphosphate. The sequence is that of Cysteine--tRNA ligase from Exiguobacterium sibiricum (strain DSM 17290 / CCUG 55495 / CIP 109462 / JCM 13490 / 255-15).